A 432-amino-acid polypeptide reads, in one-letter code: E3 ubiquitin-protein ligase RNF135 (432 aa).

The RING-type zinc finger occupies 21–63 (CIICQGLLDWPATLPCGHSFCRHCLEALWGARDARRWACPTCR). The tract at residues 95 to 121 (GSDPAHCPCPGSSSLSSAAARPRRRPE) is disordered. Low complexity predominate over residues 102-114 (PCPGSSSLSSAAA). Coiled-coil stretches lie at residues 121 to 156 (ELQR…QNQR) and 191 to 216 (DTAA…ESVT). The region spanning 241-432 (PDQSHPALRR…NYLIIKQVKV (192 aa)) is the B30.2/SPRY domain.

Homodimer. Interacts (homodimer) with RIGI (double-stranded RNA-bound oligomeric form); involved in both RIGI ubiquitination, oligomerization into filaments associated with viral RNAs and the bridging of these filaments. Interacts with UBE2D3 and UBE2N; E2 ubiquitin ligases involved in RNF135-mediated ubiquitination of RIGI and activation of the RIG-I signaling pathway. Interacts with PCBP2. In terms of processing, (Microbial infection) Cleaved and inactivated by hepatitis C virus NS3/NS4A. Expressed in skeletal muscle, spleen, kidney, placenta, prostate, stomach, thyroid and tongue. Also weakly expressed in heart, thymus, liver and lung.

It is found in the cytoplasm. It localises to the stress granule. The catalysed reaction is S-ubiquitinyl-[E2 ubiquitin-conjugating enzyme]-L-cysteine + [acceptor protein]-L-lysine = [E2 ubiquitin-conjugating enzyme]-L-cysteine + N(6)-ubiquitinyl-[acceptor protein]-L-lysine.. It functions in the pathway protein modification; protein ubiquitination. In terms of biological role, E2-dependent E3 ubiquitin-protein ligase that functions as a RIGI coreceptor in the sensing of viral RNAs in cell cytoplasm and the activation of the antiviral innate immune response. Together with the UBE2D3, UBE2N and UB2V1 E2 ligases, catalyzes the 'Lys-63'-linked polyubiquitination of RIGI oligomerized on viral RNAs, an essential step in the activation of the RIG-I signaling pathway. Through a ubiquitin-independent parallel mechanism, which consists in bridging RIGI filaments forming on longer viral RNAs, further activates the RIG-I signaling pathway. This second mechanism that synergizes with the ubiquitin-dependent one would thereby allow an RNA length-dependent regulation of the RIG-I signaling pathway. Associated with the E2 ligase UBE2N, also constitutively synthesizes unanchored 'Lys-63'-linked polyubiquitin chains that may also activate the RIG-I signaling pathway. This chain is E3 ubiquitin-protein ligase RNF135, found in Homo sapiens (Human).